We begin with the raw amino-acid sequence, 805 residues long: Shutoff protein (805 aa).

Positions 1–88 (MESVEKEDSL…QVGRGDQRHG (88 aa)) are disordered. The span at 18 to 29 (TTASTDAANAPT) shows a compositional bias: polar residues. Basic and acidic residues-rich tracts occupy residues 59–70 (RSVPTEDKKQDQ) and 79–88 (QVGRGDQRHG). Positions 280-345 (VMSELIVRRA…AVLVTVELEC (66 aa)) are binding to host EIF4G. Residues 348-466 (RFFADPEMQR…DLWTAFNERS (119 aa)) form the RRM domain. 2 positions are modified to phosphotyrosine; by host: Y365 and Y682. Residues 684–805 (DPQSGEELNP…AGTACSPTQP (122 aa)) are disordered. Gly residues predominate over residues 726 to 742 (GRGGILGQSGRGGFGRG). A compositionally biased stretch (basic residues) spans 754 to 763 (RSFRGRRGVR).

The protein belongs to the adenoviridae shutoff protein family. In terms of assembly, monomer. Interacts with hexon protein; this interaction allows chaperoning and trimerization of hexon proteins. Interacts (via N-terminus) with host initiation factor EIF4G (via C-terminus). Interacts (via RRM domain) with viral mRNAs that contain the tripartite leader; this interaction allows ribosome shunting and expression of viral late mRNAs. In terms of processing, might be cleaved by the viral protease. Phosphorylated. Tyrosine phosphorylation enhances preferential binding to tripartite leader mRNAs and allows ribosome shunting. Post-translationally, methylated. Asymmetric dimethylation by host PRMT1 of the Arg/Gly-rich region may regulate shutoff protein binding to hexon and promote the capsid assembly in the nucleus.

It is found in the host cytoplasm. Functionally, protein that inhibits host translation while promoting late viral translation by ribosome shunting. Blocks host cap-dependent translation by binding to eIF4G, displacing MKNK1 from cap initiation complexes and preventing EIF4E phosphorylation. Binds to the tripartite leader sequence of viral late mRNAs and recruits host eIF4G, PABPC1/poly-A binding protein and 40S ribosomes subunits on viral mRNAs, allowing ribosome shunting and efficient translation of late viral mRNAs even though conventional translation via ribosome scanning from the cap has been shut off in the host cell. During assembly, acts as a chaperone protein that helps hexon proteins assembly into trimers. In Homo sapiens (Human), this protein is Shutoff protein.